A 233-amino-acid chain; its full sequence is Large ribosomal subunit protein uL1 (233 aa).

Belongs to the universal ribosomal protein uL1 family. In terms of assembly, part of the 50S ribosomal subunit.

Binds directly to 23S rRNA. The L1 stalk is quite mobile in the ribosome, and is involved in E site tRNA release. Its function is as follows. Protein L1 is also a translational repressor protein, it controls the translation of the L11 operon by binding to its mRNA. The chain is Large ribosomal subunit protein uL1 from Shewanella amazonensis (strain ATCC BAA-1098 / SB2B).